The chain runs to 1070 residues: Carbamoyl phosphate synthase large chain (1070 aa).

Residues 1-401 form a carboxyphosphate synthetic domain region; the sequence is MPKRDDIKTI…ALLKAVRSLE (401 aa). 12 residues coordinate ATP: Arg129, Arg169, Gly175, Gly176, Lys208, Ile210, Glu215, Gly241, Ile242, His243, Gln284, and Glu298. One can recognise an ATP-grasp 1 domain in the interval 133–327; it reads RDLMNELGEP…IAKLAAKIAV (195 aa). Mg(2+) is bound by residues Gln284, Glu298, and Asn300. The Mn(2+) site is built by Gln284, Glu298, and Asn300. Residues 402-546 form an oligomerization domain region; sequence IGADHLLLEE…YSTYEDENES (145 aa). Residues 547–929 are carbamoyl phosphate synthetic domain; it reads IRSSKESVIV…ALYKGFVASG (383 aa). The ATP-grasp 2 domain maps to 671–861; that stretch reads EKALEILQIP…MANVATRVIL (191 aa). ATP contacts are provided by Arg707, Arg746, Val748, Glu752, Gly777, Val778, His779, Ser780, Gln820, and Glu832. The Mg(2+) site is built by Gln820, Glu832, and Asn834. Residues Gln820, Glu832, and Asn834 each coordinate Mn(2+). Positions 930–1070 constitute an MGS-like domain; that stretch reads TTMHDYGTVL…SEVKQPKARV (141 aa). Residues 930-1070 are allosteric domain; sequence TTMHDYGTVL…SEVKQPKARV (141 aa).

The protein belongs to the CarB family. In terms of assembly, composed of two chains; the small (or glutamine) chain promotes the hydrolysis of glutamine to ammonia, which is used by the large (or ammonia) chain to synthesize carbamoyl phosphate. Tetramer of heterodimers (alpha,beta)4. The cofactor is Mg(2+). Mn(2+) is required as a cofactor.

The catalysed reaction is hydrogencarbonate + L-glutamine + 2 ATP + H2O = carbamoyl phosphate + L-glutamate + 2 ADP + phosphate + 2 H(+). The enzyme catalyses hydrogencarbonate + NH4(+) + 2 ATP = carbamoyl phosphate + 2 ADP + phosphate + 2 H(+). The protein operates within amino-acid biosynthesis; L-arginine biosynthesis; carbamoyl phosphate from bicarbonate: step 1/1. Its pathway is pyrimidine metabolism; UMP biosynthesis via de novo pathway; (S)-dihydroorotate from bicarbonate: step 1/3. In terms of biological role, large subunit of the glutamine-dependent carbamoyl phosphate synthetase (CPSase). CPSase catalyzes the formation of carbamoyl phosphate from the ammonia moiety of glutamine, carbonate, and phosphate donated by ATP, constituting the first step of 2 biosynthetic pathways, one leading to arginine and/or urea and the other to pyrimidine nucleotides. The large subunit (synthetase) binds the substrates ammonia (free or transferred from glutamine from the small subunit), hydrogencarbonate and ATP and carries out an ATP-coupled ligase reaction, activating hydrogencarbonate by forming carboxy phosphate which reacts with ammonia to form carbamoyl phosphate. The protein is Carbamoyl phosphate synthase large chain of Listeria innocua serovar 6a (strain ATCC BAA-680 / CLIP 11262).